Reading from the N-terminus, the 25-residue chain is Caerin-1.4 (25 aa).

Leucine 25 bears the Leucine amide mark.

It belongs to the frog skin active peptide (FSAP) family. Caerin subfamily. Expressed by the skin parotoid and/or rostral glands.

The protein resides in the secreted. Its function is as follows. Antibacterial peptide, that adopts an alpha helical conformation which can disrupt bacterial membranes. Each caerin displays a different antimicrobial specificity. The sequence is that of Caerin-1.4 from Ranoidea caerulea (Green tree frog).